The sequence spans 368 residues: uncharacterized protein (368 aa).

This sequence belongs to the CdaR family.

This is an uncharacterized protein from Bacillus subtilis (strain 168).